We begin with the raw amino-acid sequence, 138 residues long: FUN14 domain-containing protein fndc-1 (138 aa).

The next 2 membrane-spanning stretches (helical) occupy residues 37–56 and 61–78; these read PMVQ…YFVT and LVAA…FAIH. 2 N-linked (GlcNAc...) asparagine glycosylation sites follow: Asn85 and Asn111.

Belongs to the FUN14 family. In terms of tissue distribution, broadly expressed in somatic tissues. Expressed in the hermaphrodite spermatheca and male gonad. Expressed in spermatids, but not expressed in oocytes.

It is found in the mitochondrion outer membrane. In terms of biological role, mitophagy receptor which plays a role in paternal mitochondria degradation in embryos after the two-cell stage. The sequence is that of FUN14 domain-containing protein fndc-1 from Caenorhabditis elegans.